The chain runs to 164 residues: MKEFLAVGEIINTHGIKGEVKVYPLTDDMKRFKKLKEVFIDGEERKILSCKLQPNNVVLKIEGIDSIEEANKYRKKLLEIKRENSVKLPKGSYFIADLIECRVIDEDGREIGQISDVIKTGSNDVYEVKGKSEVLVPAIKDIVTNIDIENKTVTIKPLEIWQCE.

The 72-residue stretch at 90 to 161 (KGSYFIADLI…TVTIKPLEIW (72 aa)) folds into the PRC barrel domain.

The protein belongs to the RimM family. Binds ribosomal protein uS19.

The protein localises to the cytoplasm. Its function is as follows. An accessory protein needed during the final step in the assembly of 30S ribosomal subunit, possibly for assembly of the head region. Essential for efficient processing of 16S rRNA. May be needed both before and after RbfA during the maturation of 16S rRNA. It has affinity for free ribosomal 30S subunits but not for 70S ribosomes. The sequence is that of Ribosome maturation factor RimM from Clostridium botulinum (strain Hall / ATCC 3502 / NCTC 13319 / Type A).